The chain runs to 250 residues: AA9 family lytic polysaccharide monooxygenase F (250 aa).

The signal sequence occupies residues 1 to 21; sequence MAMSKIATLAGLLASAGLVAG. His-22 serves as a coordination point for Cu(2+). Asp-51 contributes to the O2 binding site. 2 disulfides stabilise this stretch: Cys-77–Cys-200 and Cys-121–Cys-125. His-107 contributes to the Cu(2+) binding site. O2-binding residues include His-186 and Gln-195. Tyr-197 contacts Cu(2+).

The protein belongs to the glycosyl hydrolase 61 family. Cu(2+) is required as a cofactor.

It localises to the secreted. It catalyses the reaction Endohydrolysis of (1-&gt;4)-beta-D-glucosidic linkages in cellulose, lichenin and cereal beta-D-glucans.. Lytic polysaccharide monooxygenase (LMPO) that depolymerizes crystalline and amorphous polysaccharides via the oxidation of scissile alpha- or beta-(1-4)-glycosidic bonds, yielding C1 or C4 oxidation products. Catalysis by LPMOs requires the reduction of the active-site copper from Cu(II) to Cu(I) by a reducing agent and H(2)O(2) or O(2) as a cosubstrate. Major secreted component of the extracellular cellulolytic system. The chain is AA9 family lytic polysaccharide monooxygenase F from Emericella nidulans (strain FGSC A4 / ATCC 38163 / CBS 112.46 / NRRL 194 / M139) (Aspergillus nidulans).